A 443-amino-acid chain; its full sequence is Threonine/serine transporter TdcC (443 aa).

11 helical membrane passes run Thr-22–Ile-42, Ala-44–Phe-64, Gly-97–Val-117, Phe-140–Met-160, Val-163–Ile-183, Ile-207–Ile-227, Met-261–Ala-281, Phe-311–Phe-331, Ile-366–Leu-386, Ile-389–Ile-409, and Asp-423–Phe-443.

It belongs to the amino acid/polyamine transporter 2 family. SdaC/TdcC subfamily.

The protein localises to the cell inner membrane. It catalyses the reaction L-threonine(in) + H(+)(in) = L-threonine(out) + H(+)(out). The enzyme catalyses L-serine(in) + H(+)(in) = L-serine(out) + H(+)(out). Its function is as follows. Involved in the import of threonine and serine into the cell, with the concomitant import of a proton (symport system). In Shigella sonnei (strain Ss046), this protein is Threonine/serine transporter TdcC.